Here is a 221-residue protein sequence, read N- to C-terminus: Probable septum site-determining protein MinC (221 aa).

It belongs to the MinC family. Interacts with MinD and FtsZ.

Functionally, cell division inhibitor that blocks the formation of polar Z ring septums. Rapidly oscillates between the poles of the cell to destabilize FtsZ filaments that have formed before they mature into polar Z rings. Prevents FtsZ polymerization. This Shewanella baltica (strain OS223) protein is Probable septum site-determining protein MinC.